Consider the following 966-residue polypeptide: Leucine--tRNA ligase (966 aa).

The short motif at 41–51 (PYLNGNLHAGH) is the 'HIGH' region element. Positions 632-636 (KMSKS) match the 'KMSKS' region motif. K635 is an ATP binding site.

The protein belongs to the class-I aminoacyl-tRNA synthetase family.

The protein resides in the cytoplasm. It carries out the reaction tRNA(Leu) + L-leucine + ATP = L-leucyl-tRNA(Leu) + AMP + diphosphate. The polypeptide is Leucine--tRNA ligase (Methanosarcina mazei (strain ATCC BAA-159 / DSM 3647 / Goe1 / Go1 / JCM 11833 / OCM 88) (Methanosarcina frisia)).